The following is a 630-amino-acid chain: Lysophospholipase 3 (630 aa).

The first 16 residues, Met-1–Ala-16, serve as a signal peptide directing secretion. The PLA2c domain maps to Ser-39–Asp-587. N-linked (GlcNAc...) asparagine glycans are attached at residues Asn-56, Asn-95, Asn-164, Asn-220, Asn-283, Asn-351, Asn-390, Asn-443, Asn-456, Asn-462, Asn-493, Asn-514, Asn-542, Asn-566, and Asn-583. The GPI-like-anchor amidated asparagine moiety is linked to residue Asn-606. A propeptide spans Ala-607 to Ala-630 (removed in mature form).

Belongs to the lysophospholipase family. Post-translationally, the GPI-like anchor contains a phosphoceramide lipid group.

The protein resides in the cell membrane. It catalyses the reaction a 1-acyl-sn-glycero-3-phosphocholine + H2O = sn-glycerol 3-phosphocholine + a fatty acid + H(+). Its function is as follows. Catalyzes the release of fatty acids from lysophospholipids. This is Lysophospholipase 3 (plb3) from Aspergillus fumigatus (strain CBS 144.89 / FGSC A1163 / CEA10) (Neosartorya fumigata).